Here is a 387-residue protein sequence, read N- to C-terminus: EARP-interacting protein homolog (387 aa).

WD repeat units follow at residues 132 to 172, 182 to 222, 226 to 266, and 270 to 310; these read SAHG…AKAT, KGQL…QIYC, AHGQ…EPVK, and EHSH…SEPF. Residues 309–337 are disordered; sequence PFGHLVDDDDLSDPEENQQEDKGKEPLQD. Residues 315-326 are compositionally biased toward acidic residues; sequence DDDDLSDPEENQ. The WD 5 repeat unit spans residues 345–385; it reads EHEDSVYAVEWSAADPWLFASLSYDGRLVINRVPRALKYRI.

Belongs to the WD repeat EIPR1 family.

It is found in the golgi apparatus. The protein resides in the trans-Golgi network. In terms of biological role, may act as a component of endosomal retrieval machinery that is involved in protein transport from early endosomes to either recycling endosomes or the trans-Golgi network. In Danio rerio (Zebrafish), this protein is EARP-interacting protein homolog.